Consider the following 281-residue polypeptide: Phosphatidylglycerol--prolipoprotein diacylglyceryl transferase (281 aa).

4 helical membrane-spanning segments follow: residues 23–43, 71–91, 107–127, and 133–153; these read IGPL…LFAW, FVIW…VLFY, WDGG…MILF, and ILVW…LGVV. Arg-154 serves as a coordination point for a 1,2-diacyl-sn-glycero-3-phospho-(1'-sn-glycerol). 3 helical membrane passes run 189-209, 217-237, and 247-267; these read LYEA…LVWG, GFVA…VEFF, and LFGG…LLGL.

Belongs to the Lgt family.

It is found in the cell inner membrane. The enzyme catalyses L-cysteinyl-[prolipoprotein] + a 1,2-diacyl-sn-glycero-3-phospho-(1'-sn-glycerol) = an S-1,2-diacyl-sn-glyceryl-L-cysteinyl-[prolipoprotein] + sn-glycerol 1-phosphate + H(+). It participates in protein modification; lipoprotein biosynthesis (diacylglyceryl transfer). Catalyzes the transfer of the diacylglyceryl group from phosphatidylglycerol to the sulfhydryl group of the N-terminal cysteine of a prolipoprotein, the first step in the formation of mature lipoproteins. The sequence is that of Phosphatidylglycerol--prolipoprotein diacylglyceryl transferase from Brucella canis (strain ATCC 23365 / NCTC 10854 / RM-666).